The following is a 395-amino-acid chain: MQRMVILGATGSIGSSTLSVIESNPDAYSVYALVANTSVEKMLALCETHRPQIAHMVDGQAAKSLKQRLPTSLNVEITTGEDQLIDIVSASCVDSVMAAIVGAAGLVPTLAAVKAGKRVLLANKESLVMSGRLFIDEMRRSGARVLPVDSEHNAIYQALPESLQSNIGYCELEKAGVSHILLTGSGGPFLTSELASLASMTPAQACKHPNWSMGRKISVDSATMMNKGLEYIEARWLFNAADDQLKVVIHPQSVIHSMVQYLDGSVLAQLGNPDMRTPIAHCMAYPQRIQSGVEPLDFFKVGQLSFSEPDFNRFPCLALAMEACKQGQEATTVVNAANEISVQAFLENKIKFTDIAKVNEACLSQVAPQSLNSIEDIIRLDLQSRTYAAEWVKKI.

NADPH-binding residues include Thr10, Gly11, Ser12, Ile13, and Asn123. Residue Lys124 coordinates 1-deoxy-D-xylulose 5-phosphate. Position 125 (Glu125) interacts with NADPH. Asp149 provides a ligand contact to Mn(2+). Positions 150, 151, 185, and 208 each coordinate 1-deoxy-D-xylulose 5-phosphate. Residue Glu151 coordinates Mn(2+). Gly214 provides a ligand contact to NADPH. The 1-deoxy-D-xylulose 5-phosphate site is built by Ser221, Asn226, Lys227, and Glu230. Glu230 is a Mn(2+) binding site.

It belongs to the DXR family. Mg(2+) serves as cofactor. It depends on Mn(2+) as a cofactor.

The catalysed reaction is 2-C-methyl-D-erythritol 4-phosphate + NADP(+) = 1-deoxy-D-xylulose 5-phosphate + NADPH + H(+). Its pathway is isoprenoid biosynthesis; isopentenyl diphosphate biosynthesis via DXP pathway; isopentenyl diphosphate from 1-deoxy-D-xylulose 5-phosphate: step 1/6. In terms of biological role, catalyzes the NADPH-dependent rearrangement and reduction of 1-deoxy-D-xylulose-5-phosphate (DXP) to 2-C-methyl-D-erythritol 4-phosphate (MEP). The polypeptide is 1-deoxy-D-xylulose 5-phosphate reductoisomerase (Shewanella sediminis (strain HAW-EB3)).